The primary structure comprises 991 residues: MATGAENQWLKGRVKAVTSGDCLVITALSHNRAGPPPEKTITFSSLMAPKMARRGGIDEPFAWESKEFLRKLCIGKEVAFKVDYKVEAIAGREFGSVFLGNENLAKLVVKTGWAKVREPGQQNQDKVSPYIKELLQLEELAKQEGYGRWSKVPGAAEASIRNLPPSAIGDSAGFDAMGLLAANKGKPMEGIVEQVRDGSTIRVYLLPEFQFVQVFVAGVQAPSMGRRTTNGSVVETVPDEPNGDVSAESRGPLTTAQRLAASAASSVEVSSDPFATEAKYFTEHRVLSRDVRIVLEGVDKFNNLIGSVHYSDGETVKDLGLELVENGLAKFVEWSANMMEEEAKKKLKAAELQCKKDKVKMWANYVPPATNSKAIHDQNFTGKVVEVVSGDCLIVADDAVPFGSPAAERRVCLSSIRSPKMGNPRREEKPAPYAREAREFLRQRLIGKQVIVQMEYSRKVTQGDGPTTSGAADRFMDFGSVFLPSAAKADSDEVTAPPAAAIAGSQPVGVNIAELVLVRGFGNVVRHRDFEERSNHYDALLAAEARALAGKKGIHSAKESPAMHITDLTVSAAKKAKDFLPSLQRIRRIPAVVEYVLSGHRFKLYIPKITCSIAFSFSGVRCPGRGEPYSEEAISVMRRRIMQRDVEIEVETVDRTGTFLGSMWESRTNVATVLLEAGLAKMQTSFGADRIAEAHLLEQAERSAKNQKLKIWENYVEGEEVSNGNTNTVETRQKETLKVVVTEVLGGGRFYVQSAGDQKIASIQNQLASLSIKDAPIIGSFNPKRGDIVLAQFSLDNSWNRAMIVTAPRAAVQSPDEKFEVFYIDYGNQETVPYSAIRPIDPSVSAAPGLAQLCRLAYIKVPSLEDDFGPEAGEYLHTVTLGSGKEFKAVIEERDTSGGKVKGQGTGTEFVVTLIAVDDEISVNAAMLQEGIARMEKRQKWGHKGKQAALDALEKFQEEARKSRIGIWQYGDIESDDEDTGPARKPAGGRR.

N-acetylalanine is present on Ala2. TNase-like domains are found at residues 8 to 151 (QWLK…RWSK), 186 to 364 (KPME…MWAN), 378 to 557 (QNFT…IHSA), and 587 to 714 (RRIP…IWEN). Residues 227–250 (RTTNGSVVETVPDEPNGDVSAESR) are disordered. The Tudor domain occupies 782 to 847 (NPKRGDIVLA…RPIDPSVSAA (66 aa)). A Phosphotyrosine modification is found at Tyr970. The interval 971 to 991 (GDIESDDEDTGPARKPAGGRR) is disordered. Ser975 carries the post-translational modification Phosphoserine. Position 980 is a phosphothreonine (Thr980).

Expressed in seeds, leaves, flowers, roots and siliques (at protein level). Accumulates in the cap and elongation zone of the root apices (at protein level).

Its subcellular location is the cytoplasm. The protein localises to the cytoplasmic granule. The protein resides in the perinuclear region. It localises to the endoplasmic reticulum. With respect to regulation, repressed by the specific inhibitor 3',5'-deoxythymidine bisphosphate (pdTp); this RNase activity inhibition impairs subcellular relocation upon abiotic stress and leads to reduced stress resistance. Its function is as follows. Cytoprotective ribonuclease (RNase) required for resistance to abiotic stresses, acting as a positive regulator of mRNA decapping during stress. Essential for the integrity and function of cytoplasmic messenger ribonucleoprotein (mRNP) complexes called stress granules (SGs) and processing bodies (PBs), sites of post-transcriptional gene regulation during stress (e.g. salt and heat). Involved in gibberellic acid (GA) biosynthesis. Essential for stress tolerance, probably by regulating mRNAs entering the secretory pathway. Component of stress granules (SGs) that regulates growth under salt stress by modulating levels of GA20OX3 mRNA. Binds GA20OX3 mRNA. May inhibit the degradation of mRNAs involved in stress adaptation. The polypeptide is Ribonuclease TUDOR 1 (Arabidopsis thaliana (Mouse-ear cress)).